We begin with the raw amino-acid sequence, 1331 residues long: Xanthine dehydrogenase/oxidase (1331 aa).

Residues 4-91 (DELVFFVNGK…HVAVTTVEGI (88 aa)) enclose the 2Fe-2S ferredoxin-type domain. [2Fe-2S] cluster contacts are provided by C43, C48, C51, C73, C113, C116, C148, and C150. In terms of domain architecture, FAD-binding PCMH-type spans 229–412 (FEGERVTWIQ…LSIEIPYSRE (184 aa)). FAD is bound by residues 257-264 (LVVGNTEI), F335, 345-349 (SIGGN), D358, L402, and K420. An intrachain disulfide couples C534 to C991. Mo-molybdopterin is bound by residues Q766 and F797. 2 residues coordinate substrate: E801 and R879. R911 provides a ligand contact to Mo-molybdopterin. 2 residues coordinate substrate: F913 and T1009. A1078 provides a ligand contact to Mo-molybdopterin. The active-site Proton acceptor is the E1260.

The protein belongs to the xanthine dehydrogenase family. Homodimer. Interacts with BTN1A1. The cofactor is FAD. It depends on Mo-molybdopterin as a cofactor. Requires [2Fe-2S] cluster as cofactor. Subject to partial proteolysis; this alters the enzyme from the dehydrogenase form (D) to the oxidase form (O). Post-translationally, contains sulfhydryl groups that are easily oxidized (in vitro); this alters the enzyme from the dehydrogenase form (D) to the oxidase form (O).

It localises to the cytoplasm. Its subcellular location is the peroxisome. The protein resides in the secreted. The catalysed reaction is xanthine + NAD(+) + H2O = urate + NADH + H(+). The enzyme catalyses hypoxanthine + NAD(+) + H2O = xanthine + NADH + H(+). It carries out the reaction xanthine + O2 + H2O = urate + H2O2. Its activity is regulated as follows. Can be converted from the dehydrogenase form (D) to the oxidase form (O) irreversibly by proteolysis or reversibly through the oxidation of sulfhydryl groups. Functionally, key enzyme in purine degradation. Catalyzes the oxidation of hypoxanthine to xanthine. Catalyzes the oxidation of xanthine to uric acid. Contributes to the generation of reactive oxygen species. The polypeptide is Xanthine dehydrogenase/oxidase (XDH) (Felis catus (Cat)).